The primary structure comprises 191 residues: Prophage tail fiber assembly protein homolog TfaR (191 aa).

The protein belongs to the tfa family.

The polypeptide is Prophage tail fiber assembly protein homolog TfaR (tfaR) (Escherichia coli (strain K12)).